The sequence spans 279 residues: DegV domain-containing protein SA1258 (279 aa).

One can recognise a DegV domain in the interval 4 to 278 (QIIVTDSTSD…QGAIGLVVLK (275 aa)). Hexadecanoate contacts are provided by T61 and S93.

Its function is as follows. May bind long-chain fatty acids, such as palmitate, and may play a role in lipid transport or fatty acid metabolism. The chain is DegV domain-containing protein SA1258 from Staphylococcus aureus (strain N315).